A 607-amino-acid chain; its full sequence is Condensin-2 complex subunit H2 (607 aa).

Residue T19 is modified to Phosphothreonine. Phosphoserine occurs at positions 95, 231, 235, and 252. 2 disordered regions span residues 211 to 312 (YPMS…WQSL) and 325 to 347 (KGKPYSVPPGVEEAPGQKRKRKG). The segment covering 254–263 (GEEDAEDGAE) has biased composition (acidic residues). Phosphoserine is present on S494.

The protein belongs to the CND2 H2 (condensin-2 subunit 2) family. Component of the condensin-2 complex, which contains the SMC2 and SMC4 heterodimer, and three non SMC subunits, NCAPG2, NCAPH2 and NCAPD3 that probably regulate the complex.

It is found in the nucleus. Regulatory subunit of the condensin-2 complex, a complex that seems to provide chromosomes with an additional level of organization and rigidity and in establishing mitotic chromosome architecture. May promote the resolution of double-strand DNA catenanes (intertwines) between sister chromatids. Condensin-mediated compaction likely increases tension in catenated sister chromatids, providing directionality for type II topoisomerase-mediated strand exchanges toward chromatid decatenation. Required for decatenation of chromatin bridges at anaphase. Early in neurogenesis, may play an essential role to ensure accurate mitotic chromosome condensation in neuron stem cells, ultimately affecting neuron pool and cortex size. Seems to have lineage-specific role in T-cell development. The sequence is that of Condensin-2 complex subunit H2 from Mus musculus (Mouse).